The sequence spans 391 residues: MRKLFTSESVTEGHPDKICDQISDAVLDAILDKDPNGRVACETAVTTGMVMVMGEISTKCYVDIPKLVRETIRGIGYDRAKYGFDCETCSVITSIDEQSVDIAIGVDEALESKKGEMDKLDAVGAGDQGMMFGFATNETKEYMPMPIEMAHKLSRRLSEVRKNGTLPYLRPDGKTQVTVEYENGKPVRIDAIVISTQHGPEVYLEQIEKDIKEHVIKVIVPSELLDENTKYFINPTGRFVVGGPQGDSGLTGRKIIVDTYGGYGRHGGGAFSGKDPTKVDRSAAYAARWVAKNLVAAGVADKLEIQLAYAIGVAKPVSISVDTFGTGKMTDEEIVSIVNKVFDLRPGAIIRDLDLRRPIYKQVAAYGHFGRTDIDVPWERLDKVEEIKKHI.

His-14 provides a ligand contact to ATP. Residue Asp-16 participates in Mg(2+) binding. A K(+)-binding site is contributed by Glu-42. L-methionine-binding residues include Glu-55 and Gln-98. The tract at residues 98 to 108 (QSVDIAIGVDE) is flexible loop. ATP is bound by residues 172-174 (DGK), 238-239 (RF), Asp-247, 253-254 (RK), Ala-270, and Lys-274. Asp-247 is an L-methionine binding site. Lys-278 contacts L-methionine.

This sequence belongs to the AdoMet synthase family. As to quaternary structure, homotetramer; dimer of dimers. Mg(2+) serves as cofactor. Requires K(+) as cofactor.

It localises to the cytoplasm. It catalyses the reaction L-methionine + ATP + H2O = S-adenosyl-L-methionine + phosphate + diphosphate. The protein operates within amino-acid biosynthesis; S-adenosyl-L-methionine biosynthesis; S-adenosyl-L-methionine from L-methionine: step 1/1. In terms of biological role, catalyzes the formation of S-adenosylmethionine (AdoMet) from methionine and ATP. The overall synthetic reaction is composed of two sequential steps, AdoMet formation and the subsequent tripolyphosphate hydrolysis which occurs prior to release of AdoMet from the enzyme. This is S-adenosylmethionine synthase from Clostridium botulinum (strain Okra / Type B1).